Here is a 331-residue protein sequence, read N- to C-terminus: MGSDRTLKKQKMSVLQELKKITTIVADTGDFEAINIYKPTDATTNPSLILSASSMERYQPLVQKAVEYAKGKKGSVSEQVAEAMDYLCVLFGTEILKVVPGRVSTEIDARLSFDTKKSVEKALKLIALYKSLGVDKERILIKLASTWEGIKAAEILENEHGVHCNLTLLFSFAQAVACAEAGVTLISPFVGRILDWYVANTDTKKFEALKDPGVISVTNIYNYYKKFGYKTLVMGASFRNVGEIKALAGCDLLTISPALLKELENETESVVTYLSVSNAKLQDIEKITVDESRFRWLLNEDAMATDKLSEGIRKFAVDTVKLENLIKTYLK.

Lysine 142 acts as the Schiff-base intermediate with substrate in catalysis.

This sequence belongs to the transaldolase family. Type 1 subfamily. In terms of assembly, homodimer.

The protein localises to the cytoplasm. It catalyses the reaction D-sedoheptulose 7-phosphate + D-glyceraldehyde 3-phosphate = D-erythrose 4-phosphate + beta-D-fructose 6-phosphate. The protein operates within carbohydrate degradation; pentose phosphate pathway; D-glyceraldehyde 3-phosphate and beta-D-fructose 6-phosphate from D-ribose 5-phosphate and D-xylulose 5-phosphate (non-oxidative stage): step 2/3. In terms of biological role, transaldolase is important for the balance of metabolites in the pentose-phosphate pathway. This Drosophila melanogaster (Fruit fly) protein is Probable transaldolase.